A 50-amino-acid chain; its full sequence is IYVRPTKDELLYCGEFRELGQPDKKCRCDGKPCTVGRCNFARGDNDDKCI.

The Cell attachment site motif lies at 42–44 (RGD).

It belongs to the ornatin family.

Its subcellular location is the secreted. Potent inhibitor of fibrinogen interaction with platelet receptors expressed on glycoprotein IIb-IIIa complex. May prevent blood from clotting during either feeding and/or storage of ingested blood. This chain is Ornatin-E, found in Placobdella ornata (Turtle leech).